Here is a 96-residue protein sequence, read N- to C-terminus: MKLRPMQDRIIVKRVEEETKTAGGIFIPETAKEKPMEGEVVAVGNGKRTEDGKVLPLDVKVGDKVLFGKYSGTEIKVEGQDFLIMREDDILGVIEK.

This sequence belongs to the GroES chaperonin family. As to quaternary structure, heptamer of 7 subunits arranged in a ring. Interacts with the chaperonin GroEL.

It localises to the cytoplasm. In terms of biological role, together with the chaperonin GroEL, plays an essential role in assisting protein folding. The GroEL-GroES system forms a nano-cage that allows encapsulation of the non-native substrate proteins and provides a physical environment optimized to promote and accelerate protein folding. GroES binds to the apical surface of the GroEL ring, thereby capping the opening of the GroEL channel. In Geotalea uraniireducens (strain Rf4) (Geobacter uraniireducens), this protein is Co-chaperonin GroES.